A 280-amino-acid polypeptide reads, in one-letter code: Acetyl-coenzyme A carboxylase carboxyl transferase subunit beta (280 aa).

Residues 25–280 (VMRECPICHA…RLHTKENAYG (256 aa)) form the CoA carboxyltransferase N-terminal domain. Cys29, Cys32, Cys47, and Cys50 together coordinate Zn(2+). The segment at 29 to 50 (CPICHAKFLSMRLGRDHTCPKC) adopts a C4-type zinc-finger fold.

This sequence belongs to the AccD/PCCB family. In terms of assembly, acetyl-CoA carboxylase is a heterohexamer composed of biotin carboxyl carrier protein (AccB), biotin carboxylase (AccC) and two subunits each of ACCase subunit alpha (AccA) and ACCase subunit beta (AccD). Zn(2+) serves as cofactor.

The protein resides in the cytoplasm. The catalysed reaction is N(6)-carboxybiotinyl-L-lysyl-[protein] + acetyl-CoA = N(6)-biotinyl-L-lysyl-[protein] + malonyl-CoA. Its pathway is lipid metabolism; malonyl-CoA biosynthesis; malonyl-CoA from acetyl-CoA: step 1/1. Its function is as follows. Component of the acetyl coenzyme A carboxylase (ACC) complex. Biotin carboxylase (BC) catalyzes the carboxylation of biotin on its carrier protein (BCCP) and then the CO(2) group is transferred by the transcarboxylase to acetyl-CoA to form malonyl-CoA. The chain is Acetyl-coenzyme A carboxylase carboxyl transferase subunit beta from Lactobacillus helveticus (strain DPC 4571).